The primary structure comprises 141 residues: uncharacterized protein (141 aa).

A helical transmembrane segment spans residues 114–134 (ILFTCYIQSFSLLISNFFIAI).

It is found in the membrane. This is an uncharacterized protein from Schizosaccharomyces pombe (strain 972 / ATCC 24843) (Fission yeast).